Consider the following 579-residue polypeptide: Potassium-transporting ATPase potassium-binding subunit (579 aa).

Helical transmembrane passes span 2–22 (MNLVLQYGLYILILVVLAIPL), 66–86 (SFSVLAFSIISLIVLFLLHIF), 135–155 (GLTVQNFVSAAVGISVLFALI), 177–197 (VLYILIPLSIVVSLALVSQGV), 260–280 (TILSNLFEMISLLLIPVALCF), 292–312 (GIAIFVAMGIMLVVAMAIVGV), 391–411 (VFGGVGCGLYGMIGFAILAVF), 437–457 (VLVCLATPIAILIGSGIASIL), 490–510 (FAGFAANTPFINISIGLSMIF), and 546–566 (FIGLLIFVVLLIGALSFFPAL).

The protein belongs to the KdpA family. As to quaternary structure, the system is composed of three essential subunits: KdpA, KdpB and KdpC.

The protein resides in the cell membrane. In terms of biological role, part of the high-affinity ATP-driven potassium transport (or Kdp) system, which catalyzes the hydrolysis of ATP coupled with the electrogenic transport of potassium into the cytoplasm. This subunit binds the extracellular potassium ions and delivers the ions to the membrane domain of KdpB through an intramembrane tunnel. This Clostridium botulinum (strain Eklund 17B / Type B) protein is Potassium-transporting ATPase potassium-binding subunit.